The chain runs to 96 residues: Small ribosomal subunit protein bS6 (96 aa).

It belongs to the bacterial ribosomal protein bS6 family.

Its function is as follows. Binds together with bS18 to 16S ribosomal RNA. This Carboxydothermus hydrogenoformans (strain ATCC BAA-161 / DSM 6008 / Z-2901) protein is Small ribosomal subunit protein bS6.